Here is a 66-residue protein sequence, read N- to C-terminus: Small ribosomal subunit protein eS30 (66 aa).

Residues 1–35 are disordered; the sequence is MGKVHGGLNRAGKVRNATPKKDKEEKRKPKVGRAK.

Belongs to the eukaryotic ribosomal protein eS30 family.

This is Small ribosomal subunit protein eS30 (rps30-1) from Dictyostelium discoideum (Social amoeba).